Here is a 162-residue protein sequence, read N- to C-terminus: Probable chemoreceptor glutamine deamidase CheD (162 aa).

It belongs to the CheD family.

The catalysed reaction is L-glutaminyl-[protein] + H2O = L-glutamyl-[protein] + NH4(+). In terms of biological role, probably deamidates glutamine residues to glutamate on methyl-accepting chemotaxis receptors (MCPs), playing an important role in chemotaxis. The sequence is that of Probable chemoreceptor glutamine deamidase CheD from Clostridium kluyveri (strain ATCC 8527 / DSM 555 / NBRC 12016 / NCIMB 10680 / K1).